Consider the following 282-residue polypeptide: Phosphate import ATP-binding protein PstB (282 aa).

The ABC transporter domain maps to 36–277; sequence IEVKNLNFFY…PARKETEDYI (242 aa). 68–75 contributes to the ATP binding site; it reads GPSGCGKS.

This sequence belongs to the ABC transporter superfamily. Phosphate importer (TC 3.A.1.7) family. As to quaternary structure, the complex is composed of two ATP-binding proteins (PstB), two transmembrane proteins (PstC and PstA) and a solute-binding protein (PstS).

The protein localises to the cell inner membrane. The enzyme catalyses phosphate(out) + ATP + H2O = ADP + 2 phosphate(in) + H(+). Its function is as follows. Part of the ABC transporter complex PstSACB involved in phosphate import. Responsible for energy coupling to the transport system. This is Phosphate import ATP-binding protein PstB from Burkholderia pseudomallei (strain 1710b).